The chain runs to 337 residues: MIVIDGSEGEGGGAVVRVSTALAAVTSRSVRVYNIRARRSRSGLSHQHLTAVRAVARISNGTLRGDELGSMELEFSPGRVTGGTFNFDVKTAGSTGLVLQAIMVAAAASEGEIDVTVSGGTDVLWAPTCDYLREVTIPVLEMMGYSARIEIIRRGYYPEGGGRVHAIIEPSELRPITLEESEIHAVRGISHSRNLPVHVAERQAESAMKILRGAGLDVDIMVEDASGPVGRGSGITLWAEGNTRLGAVSLGKPGKRAEKVGSEAARELLGFIESGSPLDRYMGDQIIPYMALTGDSRVRTCELTLHAETNIILSEKITGRRFRVEGERGGPATIEVL.

ATP-binding positions include Gln100 and Tyr281–Gln285. His306 acts as the Tele-AMP-histidine intermediate in catalysis.

This sequence belongs to the RNA 3'-terminal cyclase family. Type 1 subfamily.

The protein localises to the cytoplasm. It carries out the reaction a 3'-end 3'-phospho-ribonucleotide-RNA + ATP = a 3'-end 2',3'-cyclophospho-ribonucleotide-RNA + AMP + diphosphate. In terms of biological role, catalyzes the conversion of 3'-phosphate to a 2',3'-cyclic phosphodiester at the end of RNA. The mechanism of action of the enzyme occurs in 3 steps: (A) adenylation of the enzyme by ATP; (B) transfer of adenylate to an RNA-N3'P to produce RNA-N3'PP5'A; (C) and attack of the adjacent 2'-hydroxyl on the 3'-phosphorus in the diester linkage to produce the cyclic end product. The biological role of this enzyme is unknown but it is likely to function in some aspects of cellular RNA processing. The protein is RNA 3'-terminal phosphate cyclase (rtcA) of Methanothermobacter thermautotrophicus (strain ATCC 29096 / DSM 1053 / JCM 10044 / NBRC 100330 / Delta H) (Methanobacterium thermoautotrophicum).